The primary structure comprises 1229 residues: ABC transporter B family member 3 (1229 aa).

The helical transmembrane segment at 22–42 (VLLMIVGSIGAIGNGVGFPLM) threads the bilayer. Residues 25 to 313 (MIVGSIGAIG…TTPCLTAFAA (289 aa)) enclose the ABC transmembrane type-1 1 domain. The N-linked (GlcNAc...) asparagine glycan is linked to Asn-56. Transmembrane regions (helical) follow at residues 73–93 (FVYL…CWMI), 149–169 (FIQL…KGWL), 172–192 (LVML…PIIV), 252–272 (GLGL…AIWF), and 281–301 (GYTG…SMSL). The 237-residue stretch at 348–584 (IELRDVCFSY…HEGAYAQLIR (237 aa)) folds into the ABC transporter 1 domain. ATP is bound at residue 383–390 (GESGSGKS). N-linked (GlcNAc...) asparagine glycosylation is present at Asn-450. Residues 594–606 (RLESSNELRDRSI) are compositionally biased toward basic and acidic residues. The disordered stretch occupies residues 594–614 (RLESSNELRDRSINRGSSRNI). An N-linked (GlcNAc...) asparagine glycan is attached at Asn-645. 2 helical membrane passes run 661-681 (ILIL…IFGI) and 706-726 (MIFV…TYLF). Residues 662–949 (LILGTLLGAV…ASSFAPDSSK (288 aa)) form the ABC transmembrane type-1 2 domain. Asn-758 is a glycosylation site (N-linked (GlcNAc...) asparagine). 3 helical membrane passes run 797–817 (IIAF…IPLI), 888–908 (GVGF…CFYV), and 923–943 (VFQV…ASSF). The 239-residue stretch at 984-1222 (IELCHISFTY…EGGVYASLVQ (239 aa)) folds into the ABC transporter 2 domain. 1019–1026 (GESGSGKS) is an ATP binding site. Asn-1073 and Asn-1173 each carry an N-linked (GlcNAc...) asparagine glycan.

Belongs to the ABC transporter superfamily. ABCB family. Multidrug resistance exporter (TC 3.A.1.201) subfamily.

It localises to the membrane. In Arabidopsis thaliana (Mouse-ear cress), this protein is ABC transporter B family member 3 (ABCB3).